A 405-amino-acid chain; its full sequence is 4-hydroxy-3-methylbut-2-en-1-yl diphosphate synthase (flavodoxin) (405 aa).

Residues cysteine 297, cysteine 300, cysteine 343, and glutamate 350 each contribute to the [4Fe-4S] cluster site.

Belongs to the IspG family. Requires [4Fe-4S] cluster as cofactor.

The enzyme catalyses (2E)-4-hydroxy-3-methylbut-2-enyl diphosphate + oxidized [flavodoxin] + H2O + 2 H(+) = 2-C-methyl-D-erythritol 2,4-cyclic diphosphate + reduced [flavodoxin]. The protein operates within isoprenoid biosynthesis; isopentenyl diphosphate biosynthesis via DXP pathway; isopentenyl diphosphate from 1-deoxy-D-xylulose 5-phosphate: step 5/6. In terms of biological role, converts 2C-methyl-D-erythritol 2,4-cyclodiphosphate (ME-2,4cPP) into 1-hydroxy-2-methyl-2-(E)-butenyl 4-diphosphate. The sequence is that of 4-hydroxy-3-methylbut-2-en-1-yl diphosphate synthase (flavodoxin) from Francisella tularensis subsp. novicida (strain U112).